Here is a 547-residue protein sequence, read N- to C-terminus: MRVNLLIAMIIFALIWPATALRAAVSKTTWADAPAREFVFVENNSDDNFFVTPGGALDPRLTGANRWTGLKYNGSGTIYQQSLGYIDNGYNTGLYTNWKFDMWLENSPVSSPLTGLRCINWYAGCNMTTSLILPQTTDASGFYGATVTSGGAKWMHGMLSDAFYQYLQQMPVGSSFTMTINACQTSVNYDASSGARCKDQASGNWYVRNVTHTKAANLRLINTHSLAEVFINSDGVPTLGEGNADCRTQTIGSRSGLSCKMVNYTLQTNGLSNTSIHIFPAIANSSLASAVGAYDMQFSLNGSSWKPVSNTAYYYTFNEMKSADSIYVFFSSNFFKQMVNLGISDINTKDLFNFRFQNTTSPESGWYEFSTSNTLIIKPRDFSISIISDEYTQTPSREGYVASGESALDFGYIVTTSGKTAADEVLIKVTGPAQVIGGRSYCVFSSDDGKAKVPFPATLSFITRNGATKTYDAGCDDSWRDMTDALWLTTPWTDISGEVGQMDKTTVKFSIPMDNAISLRTVDDNGWFGEVSASGEIHVQATWRNIN.

The first 20 residues, methionine 1–alanine 20, serve as a signal peptide directing secretion.

It belongs to the EcpD/MatE family. Forms polymers. Interacts with EcpA.

Its subcellular location is the fimbrium. Part of the ecpRABCDE operon, which encodes the E.coli common pilus (ECP). ECP is found in both commensal and pathogenic strains and plays a dual role in early-stage biofilm development and host cell recognition. Tip pilus adhesin, which is required for assembly of EcpA into fibers. This Escherichia coli O127:H6 (strain E2348/69 / EPEC) protein is Fimbria adhesin EcpD (ecpD).